A 558-amino-acid polypeptide reads, in one-letter code: Inositol-3-phosphate synthase (558 aa).

The disordered stretch occupies residues 1–34; that stretch reads MSPTALDACDHHDSFSLPAQDQSKVHPSARRTPE. NAD(+) contacts are provided by G99, G100, N101, N102, D174, S210, I211, Q221, R224, T262, A263, N264, T265, G313, S314, D338, S341, N372, N373, D374, K387, G439, D440, D468, and S469.

The protein belongs to the myo-inositol 1-phosphate synthase family. In terms of assembly, homotetramer. It depends on NAD(+) as a cofactor.

It is found in the cytoplasm. It catalyses the reaction D-glucose 6-phosphate = 1D-myo-inositol 3-phosphate. The protein operates within polyol metabolism; myo-inositol biosynthesis; myo-inositol from D-glucose 6-phosphate: step 1/2. Functionally, key enzyme in myo-inositol biosynthesis pathway that catalyzes the conversion of glucose 6-phosphate to 1-myo-inositol 1-phosphate in a NAD-dependent manner. Rate-limiting enzyme in the synthesis of all inositol-containing compounds. The chain is Inositol-3-phosphate synthase from Cryptococcus neoformans var. grubii serotype A (strain H99 / ATCC 208821 / CBS 10515 / FGSC 9487) (Filobasidiella neoformans var. grubii).